The sequence spans 201 residues: ATP-dependent Clp protease proteolytic subunit (201 aa).

Ser-98 functions as the Nucleophile in the catalytic mechanism. His-123 is a catalytic residue.

This sequence belongs to the peptidase S14 family. Fourteen ClpP subunits assemble into 2 heptameric rings which stack back to back to give a disk-like structure with a central cavity, resembling the structure of eukaryotic proteasomes.

The protein resides in the cytoplasm. The catalysed reaction is Hydrolysis of proteins to small peptides in the presence of ATP and magnesium. alpha-casein is the usual test substrate. In the absence of ATP, only oligopeptides shorter than five residues are hydrolyzed (such as succinyl-Leu-Tyr-|-NHMec, and Leu-Tyr-Leu-|-Tyr-Trp, in which cleavage of the -Tyr-|-Leu- and -Tyr-|-Trp bonds also occurs).. Its function is as follows. Cleaves peptides in various proteins in a process that requires ATP hydrolysis. Has a chymotrypsin-like activity. Plays a major role in the degradation of misfolded proteins. This chain is ATP-dependent Clp protease proteolytic subunit, found in Rickettsia peacockii (strain Rustic).